Reading from the N-terminus, the 452-residue chain is UPF0210 protein Ccel_1722 (452 aa).

This sequence belongs to the UPF0210 family. As to quaternary structure, homodimer.

This Ruminiclostridium cellulolyticum (strain ATCC 35319 / DSM 5812 / JCM 6584 / H10) (Clostridium cellulolyticum) protein is UPF0210 protein Ccel_1722.